Consider the following 256-residue polypeptide: Pimeloyl-[acyl-carrier protein] methyl ester esterase (256 aa).

The 228-residue stretch at 15–242 (HLVLLHGWGL…AAHAPFISHP (228 aa)) folds into the AB hydrolase-1 domain. Residues tryptophan 22, 82–83 (SL), and 143–147 (FLALQ) each bind substrate. Catalysis depends on serine 82, which acts as the Nucleophile. Catalysis depends on residues aspartate 207 and histidine 235. Histidine 235 provides a ligand contact to substrate.

The protein belongs to the AB hydrolase superfamily. Carboxylesterase BioH family. As to quaternary structure, monomer.

The protein localises to the cytoplasm. The enzyme catalyses 6-carboxyhexanoyl-[ACP] methyl ester + H2O = 6-carboxyhexanoyl-[ACP] + methanol + H(+). It participates in cofactor biosynthesis; biotin biosynthesis. Functionally, the physiological role of BioH is to remove the methyl group introduced by BioC when the pimeloyl moiety is complete. It allows to synthesize pimeloyl-ACP via the fatty acid synthetic pathway through the hydrolysis of the ester bonds of pimeloyl-ACP esters. The polypeptide is Pimeloyl-[acyl-carrier protein] methyl ester esterase (Escherichia coli (strain SMS-3-5 / SECEC)).